Consider the following 185-residue polypeptide: dCTP deaminase (185 aa).

DCTP-binding positions include 107 to 112 (KSTYAR), 131 to 133 (TLE), Gln152, Tyr166, and Gln176. Glu133 functions as the Proton donor/acceptor in the catalytic mechanism.

The protein belongs to the dCTP deaminase family. As to quaternary structure, homotrimer.

The catalysed reaction is dCTP + H2O + H(+) = dUTP + NH4(+). Its pathway is pyrimidine metabolism; dUMP biosynthesis; dUMP from dCTP (dUTP route): step 1/2. Catalyzes the deamination of dCTP to dUTP. This chain is dCTP deaminase, found in Anaplasma marginale (strain Florida).